The sequence spans 433 residues: L-lysine 2,3-aminomutase (433 aa).

Positions 122–334 constitute a Radical SAM core domain; it reads HRYPDRVLFY…SLIGHTTGFA (213 aa). Positions 136, 140, and 143 each coordinate [4Fe-4S] cluster. Position 279 (C279) interacts with Zn(2+). Position 348 is an N6-(pyridoxal phosphate)lysine (K348). Zn(2+)-binding residues include C389, C392, and C396.

The protein belongs to the radical SAM superfamily. KamA family. The cofactor is [4Fe-4S] cluster. Pyridoxal 5'-phosphate is required as a cofactor. Requires Zn(2+) as cofactor.

The enzyme catalyses L-lysine = (3S)-3,6-diaminohexanoate. Functionally, catalyzes the interconversion of L-alpha-lysine and L-beta-lysine. Is involved in the biosynthesis pathway of N6-acetyl-beta-lysine, a compatible solute produced by methanogenic archaea that helps cells to cope with salt stress. In Methanococcus maripaludis (strain DSM 14266 / JCM 13030 / NBRC 101832 / S2 / LL), this protein is L-lysine 2,3-aminomutase (ablA).